The sequence spans 415 residues: Transfer protein TraSA (415 aa).

One can recognise a FtsK domain in the interval 127–326 (DGAVHYRDYR…HRVNDETSAN (200 aa)). 145-152 (GATESGKS) is an ATP binding site.

In Streptomyces ambofaciens, this protein is Transfer protein TraSA (traSA).